A 411-amino-acid chain; its full sequence is Eukaryotic initiation factor 4A-III (411 aa).

An N-acetylmethionine modification is found at M1. Position 2 is an N-acetylalanine; in Eukaryotic initiation factor 4A-III, N-terminally processed (A2). S10 and S12 each carry phosphoserine. K19 participates in a covalent cross-link: Glycyl lysine isopeptide (Lys-Gly) (interchain with G-Cter in SUMO2). The Q motif signature appears at 38–66 (PTFDTMGLREDLLRGIYAYGFEKPSAIQQ). ATP contacts are provided by residues K60, Q65, and 85-90 (GTGKTA). Residues 69–239 (IKQIIKGRDV…NKFMTDPIRI (171 aa)) enclose the Helicase ATP-binding domain. The residue at position 124 (K124) is an N6-acetyllysine. K152 is covalently cross-linked (Glycyl lysine isopeptide (Lys-Gly) (interchain with G-Cter in SUMO2)). A Phosphothreonine modification is found at T163. The DEAD box signature appears at 187-190 (DEAD). An N6-acetyllysine mark is found at K198 and K296. In terms of domain architecture, Helicase C-terminal spans 250–411 (GIKQFFVAVE…EMPMNVADLI (162 aa)). A Glycyl lysine isopeptide (Lys-Gly) (interchain with G-Cter in SUMO2) cross-link involves residue K314. Position 321 is an N6-acetyllysine (K321). ATP contacts are provided by residues D342 and 367-371 (RSGRY). Residues K374 and K382 each participate in a glycyl lysine isopeptide (Lys-Gly) (interchain with G-Cter in SUMO2) cross-link.

This sequence belongs to the DEAD box helicase family. eIF4A subfamily. Identified in the spliceosome C complex. Core component of the mRNA splicing-dependent exon junction complex (EJC); the core complex contains CASC3, EIF4A3, MAGOH or MAGOHB, and RBM8A. Interacts with CASC3, MAGOH, NXF1, RBM8A and ALYREF/THOC4. Component of the ALYREF/THOC4-EJC-RNA complex; in the complex interacts with MAGOH, RBM8A and THOC4 (via the WXHD motif); these interactions are likely specific to RNA-bound EJC. May interact with NOM1. Interacts with POLDIP3. Interacts with CWC22 and PRPF19 in an RNA-independent manner. Direct interaction with CWC22 is mediated by the helicase C-terminal domain. Full interaction with CWC22 occurs only when EIF4A3 is not part of the EJC and prevents EIF4A3 binding to RNA. Identified in a complex composed of the EJC core, UPF3B and UPF2. The EJC core can also interact with UPF3A (in vitro). Interacts with NCBP3. Interacts with NRDE2. Interacts with DHX34; the interaction is RNA-independent. In terms of tissue distribution, ubiquitously expressed.

Its subcellular location is the nucleus. It localises to the nucleus speckle. It is found in the cytoplasm. The enzyme catalyses ATP + H2O = ADP + phosphate + H(+). With respect to regulation, the ATPase activity is increased some 4-fold in the presence of RNA. In terms of biological role, ATP-dependent RNA helicase. Involved in pre-mRNA splicing as component of the spliceosome. Core component of the splicing-dependent multiprotein exon junction complex (EJC) deposited at splice junctions on mRNAs. The EJC is a dynamic structure consisting of core proteins and several peripheral nuclear and cytoplasmic associated factors that join the complex only transiently either during EJC assembly or during subsequent mRNA metabolism. The EJC marks the position of the exon-exon junction in the mature mRNA for the gene expression machinery and the core components remain bound to spliced mRNAs throughout all stages of mRNA metabolism thereby influencing downstream processes including nuclear mRNA export, subcellular mRNA localization, translation efficiency and nonsense-mediated mRNA decay (NMD). Its RNA-dependent ATPase and RNA-helicase activities are induced by CASC3, but abolished in presence of the MAGOH-RBM8A heterodimer, thereby trapping the ATP-bound EJC core onto spliced mRNA in a stable conformation. The inhibition of ATPase activity by the MAGOH-RBM8A heterodimer increases the RNA-binding affinity of the EJC. Involved in translational enhancement of spliced mRNAs after formation of the 80S ribosome complex. Binds spliced mRNA in sequence-independent manner, 20-24 nucleotides upstream of mRNA exon-exon junctions. Shows higher affinity for single-stranded RNA in an ATP-bound core EJC complex than after the ATP is hydrolyzed. Involved in the splicing modulation of BCL2L1/Bcl-X (and probably other apoptotic genes); specifically inhibits formation of proapoptotic isoforms such as Bcl-X(S); the function is different from the established EJC assembly. Involved in craniofacial development. This is Eukaryotic initiation factor 4A-III (EIF4A3) from Homo sapiens (Human).